A 347-amino-acid chain; its full sequence is MLVLGIESSCDETAAAVVNDRREILGEVVLSQLDEHRPFGGVVPEIAARSHLAHMDKLVAEAMRRAGVGFADLDAVAATGGPGLIGGVIVGVMTGKAIALAAGKPFLAVNHLEGHALTPRLTHDIAFPYLLLLASGGHCQLLAVEGVGRYTRLGTTIDDAAGEAFDKVAKMAGLGYPGGPAVEAAAQGGDPARFTLPRPMKGKPGCDFSFSGLKNAARLLIESLPQPLSAADQADVARAFQDAVADAMADRVRRGVREMKSRWPQTQHLVVAGGVAANTALRQVLVRIGNETGLEFLAPPLKLCTDNAAMIAWAGLERLRLGQSDDLTFAPRPRWPLDPTARKGAKA.

Fe cation-binding residues include histidine 111 and histidine 115. Residues 133-137 (LASGG), aspartate 166, glycine 179, and asparagine 278 each bind substrate. Fe cation is bound at residue aspartate 306.

Belongs to the KAE1 / TsaD family. Fe(2+) is required as a cofactor.

Its subcellular location is the cytoplasm. It catalyses the reaction L-threonylcarbamoyladenylate + adenosine(37) in tRNA = N(6)-L-threonylcarbamoyladenosine(37) in tRNA + AMP + H(+). In terms of biological role, required for the formation of a threonylcarbamoyl group on adenosine at position 37 (t(6)A37) in tRNAs that read codons beginning with adenine. Is involved in the transfer of the threonylcarbamoyl moiety of threonylcarbamoyl-AMP (TC-AMP) to the N6 group of A37, together with TsaE and TsaB. TsaD likely plays a direct catalytic role in this reaction. This Paramagnetospirillum magneticum (strain ATCC 700264 / AMB-1) (Magnetospirillum magneticum) protein is tRNA N6-adenosine threonylcarbamoyltransferase.